Here is a 714-residue protein sequence, read N- to C-terminus: Polyribonucleotide nucleotidyltransferase (714 aa).

Aspartate 487 and aspartate 493 together coordinate Mg(2+). A KH domain is found at 554 to 613 (PRIEVLQIPTDKIRDVIGTGGKVIREIVEKTGAKINIEDDGTVKVASANGESIRAAIKWI). Residues 623 to 691 (GQIYDGTVVK…DRGKVRLSMK (69 aa)) form the S1 motif domain.

This sequence belongs to the polyribonucleotide nucleotidyltransferase family. It depends on Mg(2+) as a cofactor.

The protein resides in the cytoplasm. The enzyme catalyses RNA(n+1) + phosphate = RNA(n) + a ribonucleoside 5'-diphosphate. Involved in mRNA degradation. Catalyzes the phosphorolysis of single-stranded polyribonucleotides processively in the 3'- to 5'-direction. In Afipia carboxidovorans (strain ATCC 49405 / DSM 1227 / KCTC 32145 / OM5) (Oligotropha carboxidovorans), this protein is Polyribonucleotide nucleotidyltransferase.